A 207-amino-acid polypeptide reads, in one-letter code: Large ribosomal subunit protein uL4 (207 aa).

The disordered stretch occupies residues 48 to 78 (THKVKTRSEVRGGGRKPWRQKGTGRARQGSI). Over residues 60–71 (GGRKPWRQKGTG) the composition is skewed to basic residues.

It belongs to the universal ribosomal protein uL4 family. As to quaternary structure, part of the 50S ribosomal subunit.

In terms of biological role, one of the primary rRNA binding proteins, this protein initially binds near the 5'-end of the 23S rRNA. It is important during the early stages of 50S assembly. It makes multiple contacts with different domains of the 23S rRNA in the assembled 50S subunit and ribosome. Functionally, forms part of the polypeptide exit tunnel. This chain is Large ribosomal subunit protein uL4, found in Bacillus pumilus (strain SAFR-032).